Reading from the N-terminus, the 213-residue chain is ATP synthase subunit b 2 (213 aa).

The segment at 1–45 (MFVTEAYAQSAPTVGETHTETPAVGQPQPEATHTETGVAHGAEHG) is disordered. A helical transmembrane segment spans residues 57–76 (TYASQVLWLAITFGLFYLLM).

This sequence belongs to the ATPase B chain family. As to quaternary structure, F-type ATPases have 2 components, F(1) - the catalytic core - and F(0) - the membrane proton channel. F(1) has five subunits: alpha(3), beta(3), gamma(1), delta(1), epsilon(1). F(0) has three main subunits: a(1), b(2) and c(10-14). The alpha and beta chains form an alternating ring which encloses part of the gamma chain. F(1) is attached to F(0) by a central stalk formed by the gamma and epsilon chains, while a peripheral stalk is formed by the delta and b chains.

The protein resides in the cell inner membrane. Its function is as follows. F(1)F(0) ATP synthase produces ATP from ADP in the presence of a proton or sodium gradient. F-type ATPases consist of two structural domains, F(1) containing the extramembraneous catalytic core and F(0) containing the membrane proton channel, linked together by a central stalk and a peripheral stalk. During catalysis, ATP synthesis in the catalytic domain of F(1) is coupled via a rotary mechanism of the central stalk subunits to proton translocation. In terms of biological role, component of the F(0) channel, it forms part of the peripheral stalk, linking F(1) to F(0). The b'-subunit is a diverged and duplicated form of b found in plants and photosynthetic bacteria. This Agrobacterium fabrum (strain C58 / ATCC 33970) (Agrobacterium tumefaciens (strain C58)) protein is ATP synthase subunit b 2 (atpF2).